Consider the following 572-residue polypeptide: Arginine--tRNA ligase (572 aa).

The 'HIGH' region signature appears at 122 to 132 (PNLAKEMHVGH).

It belongs to the class-I aminoacyl-tRNA synthetase family. As to quaternary structure, monomer.

It is found in the cytoplasm. It catalyses the reaction tRNA(Arg) + L-arginine + ATP = L-arginyl-tRNA(Arg) + AMP + diphosphate. This is Arginine--tRNA ligase from Neisseria meningitidis serogroup A / serotype 4A (strain DSM 15465 / Z2491).